The following is a 415-amino-acid chain: Tyrosine--tRNA ligase (415 aa).

The 'HIGH' region motif lies at 54-63 (PTGRDIHLGH). Residues 248–252 (KMSKS) carry the 'KMSKS' region motif. An ATP-binding site is contributed by Lys-251. Residues 351-415 (AKAFYLLSAI…GKKTFRRLTR (65 aa)) form the S4 RNA-binding domain.

This sequence belongs to the class-I aminoacyl-tRNA synthetase family. TyrS type 2 subfamily. In terms of assembly, homodimer.

It is found in the cytoplasm. The catalysed reaction is tRNA(Tyr) + L-tyrosine + ATP = L-tyrosyl-tRNA(Tyr) + AMP + diphosphate + H(+). In terms of biological role, catalyzes the attachment of tyrosine to tRNA(Tyr) in a two-step reaction: tyrosine is first activated by ATP to form Tyr-AMP and then transferred to the acceptor end of tRNA(Tyr). The polypeptide is Tyrosine--tRNA ligase (Prochlorococcus marinus (strain MIT 9313)).